The following is a 229-amino-acid chain: Transcriptional regulatory protein YxdJ (229 aa).

Residues 3–116 (KIMIVEDSED…IVLAKIKSQI (114 aa)) form the Response regulatory domain. At D52 the chain carries 4-aspartylphosphate. The ompR/PhoB-type DNA-binding region spans 129–227 (EKVVEYAGVQ…VRGEGYQLRA (99 aa)).

In terms of processing, phosphorylated by YxdK.

Its subcellular location is the cytoplasm. Probable member of the two-component regulatory system YxdK/YxdJ. Positively regulates the expression of the yxdLMyxeA operon by direct interaction with its promoter region. Could also indirectly regulate the expression of the dlt operon. The sequence is that of Transcriptional regulatory protein YxdJ (yxdJ) from Bacillus subtilis (strain 168).